The primary structure comprises 32 residues: Protamine-1 (32 aa).

Residues 1–32 (PRRRRASSGRPVRRRRRPKMSRRRRRGGRRRR) are disordered.

Testis.

The protein localises to the nucleus. The protein resides in the chromosome. Protamines substitute for histones in the chromatin of sperm during the haploid phase of spermatogenesis. They compact sperm DNA into a highly condensed, stable and inactive complex. This is Protamine-1 from Esox lucius (Northern pike).